The chain runs to 1538 residues: Lhr helicase/uracil glycosylase (1538 aa).

The lhr-Core stretch occupies residues 1 to 897; sequence MADNPDPSSL…ERRASVLSLD (897 aa). ATP is bound by residues glutamine 34, lysine 57, threonine 58, aspartate 179, glutamate 180, isoleucine 398, arginine 415, and histidine 418. Residues 38–235 enclose the Helicase ATP-binding domain; the sequence is WHVAARSEHA…FLGGDRPVTV (198 aa). Positions 179-182 match the DEVH box motif; it reads DEVH. Residues 284 to 462 enclose the Helicase C-terminal domain; the sequence is GILDEVLRHR…NLTPPHNPLD (179 aa). Residues 463–552 are beta-sheet bundle; the sequence is VLAQQTVAAA…VTSGGTIPDR (90 aa). The WH domain stretch occupies residues 553 to 623; sequence GMYSVLLPEG…SARLPFWRGE (71 aa). Residues 624 to 897 are domain 4; that stretch reads GNGRPAELGE…ERRASVLSLD (274 aa). The interval 898-1538 is lhr-CTD; the sequence is SELLRNLLGQ…SSSPQGLDWG (641 aa). A disordered region spans residues 1287–1312; it reads SNARTSTRRSHRARRGRPVYAQPVSP. The span at 1292–1303 shows a compositional bias: basic residues; it reads STRRSHRARRGR.

Belongs to the Lhr helicase family. Homooligomerizes, probably a homotetramer. Ca(2+) is required as a cofactor. Uracil deglycosylase activity does not require a cofactor. serves as cofactor.

The enzyme catalyses Couples ATP hydrolysis with the unwinding of duplex DNA by translocating in the 3'-5' direction.. It catalyses the reaction ATP + H2O = ADP + phosphate + H(+). It carries out the reaction Hydrolyzes single-stranded DNA or mismatched double-stranded DNA and polynucleotides, releasing free uracil.. Its function is as follows. A 3'-5' helicase probably involved in DNA repair. Translocates in an ATP-dependent manner 3'-to-5' on single-stranded (ss)DNA, unwinding any encountered duplex nucleic acid. An RNA:DNA hybrid with a 3'-ssDNA loading strand is a 4.5-fold better helicase substrate than 3'-tailed double-stranded (ds)DNA; substrates where the helicase loads on a 3'-ssRNA tail (DNA:RNA and RNA:RNA) are not unwound. Unlike its M.smegmatis counterpart, the ATPase is not ssDNA-dependent. Forms a clamp around the ssDNA loading strand. Functionally, excises uracil residues from DNA; forked DNA with a dU residue is the best substrate followed by ssDNA. Inactive on dsDNA with a dU residue or DNA with an 8-oxoguanine residue. Uracil residues in DNA can arise as a result of misincorporation of dUMP residues by DNA polymerase or due to deamination of cytosine. This Escherichia coli (strain K12) protein is Lhr helicase/uracil glycosylase.